A 687-amino-acid polypeptide reads, in one-letter code: Protein FAR1-RELATED SEQUENCE 1 (687 aa).

In terms of domain architecture, FAR1 spans 35 to 137; the sequence is EFYKEYANSV…VKEHNHEIFT (103 aa). Residues 211-254 form the MULE domain; it reads KAMHGCRPRVILTKHDQMLKEAVLEVFPSSRHCFYMWDTLGQMP. An SWIM-type zinc finger spans residues 440–476; it reads FVVVWNSESSEVVCSCRLFELKGFLCRHAMIVLQMSG. Positions 540 to 562 form a coiled coil; sequence NVLNEALRKWENKSNLIQNLEES.

It belongs to the FHY3/FAR1 family. In terms of tissue distribution, expressed in rosette and cauline leaves, inflorescences stems, flowers and siliques.

The protein localises to the nucleus. Functionally, putative transcription activator involved in regulating light control of development. In Arabidopsis thaliana (Mouse-ear cress), this protein is Protein FAR1-RELATED SEQUENCE 1 (FRS1).